Here is a 736-residue protein sequence, read N- to C-terminus: Catalase-peroxidase (736 aa).

A compositionally biased stretch (basic and acidic residues) spans 1 to 10 (MDAKTDDKGA). Residues 1 to 26 (MDAKTDDKGAGKCPFSGGSHGHRNRD) are disordered. A cross-link (tryptophyl-tyrosyl-methioninium (Trp-Tyr) (with M-244)) is located at residues 96 to 218 (WHSAGTYRIT…LGAVQMGLIY (123 aa)). The active-site Proton acceptor is the His97. Positions 218–244 (YVNPEGPNGNPDPVAAAKDIRETFARM) form a cross-link, tryptophyl-tyrosyl-methioninium (Tyr-Met) (with W-96). His259 is a heme b binding site.

It belongs to the peroxidase family. Peroxidase/catalase subfamily. Homodimer or homotetramer. It depends on heme b as a cofactor. Formation of the three residue Trp-Tyr-Met cross-link is important for the catalase, but not the peroxidase activity of the enzyme.

It catalyses the reaction H2O2 + AH2 = A + 2 H2O. The catalysed reaction is 2 H2O2 = O2 + 2 H2O. Bifunctional enzyme with both catalase and broad-spectrum peroxidase activity. The polypeptide is Catalase-peroxidase (Rhodopseudomonas palustris (strain ATCC BAA-98 / CGA009)).